A 1056-amino-acid chain; its full sequence is PAX-interacting protein 1 (1056 aa).

BRCT domains lie at 8-93 (VPEE…GFSP) and 94-183 (ESCQ…FYHP). The interaction with PAGR1 stretch occupies residues 94 to 183 (ESCQIFFGLT…RRKDEAFYHP (90 aa)). Residues 188-205 (YEEEEEEEEEGDNEEQDS) show a composition bias toward acidic residues. Disordered stretches follow at residues 188 to 276 (YEEE…QRRL), 393 to 412 (THVL…HPAL), and 419 to 486 (MQLQ…FQQQ). The segment covering 214–223 (SSVASSAVAS) has biased composition (low complexity). Residues S223 and S230 each carry the phosphoserine modification. Composition is skewed to low complexity over residues 396 to 412 (LQQH…HPAL), 419 to 435 (MQLQ…QQQP), and 445 to 486 (QFPQ…FQQQ). The interaction with TP53BP1 stretch occupies residues 577 to 1056 (QLFGHDPAVE…TLDYESYKFN (480 aa)). BRCT domains are found at residues 588-681 (PEES…RALH), 688-776 (PGGK…VQYS), 853-934 (TPLV…NYIL), and 955-989 (HVSP…GGKV). A Nuclear localization signal motif is present at residues 655-672 (RKRCVTAHWLNTVLKKKK).

In terms of assembly, interacts with the C-terminal transactivation domain of PAX2. Forms a constitutive complex with PAGR1 independently of the MLL2/MLL3 complex. Interacts with TP53BP1 (when phosphorylated at the N-terminus by ATM). Interacts with HLTF. Component of the KMT2 family MLL2/MLL3 complex (also named ASCOM complex), at least composed of the HMTs KMT2D and/or KMT2C, the common subunits ASH2L, RBBP5, WDR5 and DPY30, and the complex type-specific subunits PAXIP1/PTIP, PAGR1, NCOA6 and KDM6A; required for the association of PAGR1 with the MLL2/MLL3 complex. Interacts with NUPR1; this interaction prevents PAXIP1 inhibition of PAX2 transcription factor activity. As to expression, expression detected in all tissues examined, including brain stem, cerebellum, cortex, heart, spleen, kidney, liver, thymus and lung.

It is found in the nucleus matrix. It localises to the chromosome. Its function is as follows. Involved in DNA damage response and in transcriptional regulation through histone methyltransferase (HMT) complexes such as the MLL2/MLL3 complex. Plays a role in early development. In DNA damage response is required for cell survival after ionizing radiation. In vitro shown to be involved in the homologous recombination mechanism for the repair of double-strand breaks (DSBs). Its localization to DNA damage foci requires Rnf8 and Ube2n. Recruits Tp53bp1 to DNA damage foci and, at least in particular repair processes, effective DNA damage response appears to require the association with Tp53bp1 phosphorylated by Atm. Together with Tp53bp1 regulates Atm association. Proposed to recruit Pagr1 to sites of DNA damage and the Pagr1:Paxip1 complex is required for cell survival in response to DNA damage independently of the MLL2/MLL3 complex. However, this function has been questioned. Promotes ubiquitination of PCNA following UV irradiation and may regulate recruitment of polymerase eta and Rad51 to chromatin after DNA damage. Proposed to be involved in transcriptional regulation by linking MLL-containing histone methyltransferase (HMT) complexes to gene promoters by interacting with promoter-bound transcription factors such as Pax2. Associates with gene promoters that are known to be regulated by Kmt2d/Mll2. During immunoglobulin class switching in activated B-cells is involved in trimethylation of histone H3 at 'Lys-4' and in transcription initiation of downstream switch regions at the immunoglobulin heavy-chain (Igh) locus; this function appears to involve the recruitment of MLL-containing HMT complexes. Conflictingly, its function in transcriptional regulation during immunoglobulin class switching is reported to be independent of the MLL2/MLL3 complex. This chain is PAX-interacting protein 1 (Paxip1), found in Mus musculus (Mouse).